The chain runs to 497 residues: Anthranilate synthase component 1 (497 aa).

Residues serine 49 and 271-273 each bind L-tryptophan; that span reads PYL. Position 312 to 313 (312 to 313) interacts with chorismate; sequence GT. Glutamate 339 is a Mg(2+) binding site. Chorismate-binding positions include arginine 447, 461–463, and glycine 463; that span reads GAG. Glutamate 476 contacts Mg(2+).

The protein belongs to the anthranilate synthase component I family. Heterotetramer consisting of two non-identical subunits: a beta subunit (TrpG) and a large alpha subunit (TrpE). Mg(2+) is required as a cofactor.

It carries out the reaction chorismate + L-glutamine = anthranilate + pyruvate + L-glutamate + H(+). It functions in the pathway amino-acid biosynthesis; L-tryptophan biosynthesis; L-tryptophan from chorismate: step 1/5. Its activity is regulated as follows. Feedback inhibited by tryptophan. Functionally, part of a heterotetrameric complex that catalyzes the two-step biosynthesis of anthranilate, an intermediate in the biosynthesis of L-tryptophan. In the first step, the glutamine-binding beta subunit (TrpG) of anthranilate synthase (AS) provides the glutamine amidotransferase activity which generates ammonia as a substrate that, along with chorismate, is used in the second step, catalyzed by the large alpha subunit of AS (TrpE) to produce anthranilate. In the absence of TrpG, TrpE can synthesize anthranilate directly from chorismate and high concentrations of ammonia. The chain is Anthranilate synthase component 1 (trpE) from Acinetobacter calcoaceticus.